The sequence spans 364 residues: F-box/LRR-repeat protein At1g55660 (364 aa).

Residues 52–98 (MDKISQLPDELLVKVLSFLSTKDAVSTSILSMRWKSLWMWLPKLEYN) enclose the F-box domain. LRR repeat units follow at residues 158-179 (NVRE…LPKS), 185-206 (SIVI…VCLP), 207-228 (SLKT…HRLL), 233-254 (VLED…SVIV), 256-277 (SLQR…KMNS), and 279-300 (SLKY…ESDS).

In Arabidopsis thaliana (Mouse-ear cress), this protein is F-box/LRR-repeat protein At1g55660.